Consider the following 341-residue polypeptide: tRNA N6-adenosine threonylcarbamoyltransferase (341 aa).

Fe cation is bound by residues H111 and H115. Residues 134 to 138 (LVSGG), D167, G180, and N276 each bind substrate. Position 304 (D304) interacts with Fe cation.

Belongs to the KAE1 / TsaD family. Fe(2+) is required as a cofactor.

It localises to the cytoplasm. The catalysed reaction is L-threonylcarbamoyladenylate + adenosine(37) in tRNA = N(6)-L-threonylcarbamoyladenosine(37) in tRNA + AMP + H(+). In terms of biological role, required for the formation of a threonylcarbamoyl group on adenosine at position 37 (t(6)A37) in tRNAs that read codons beginning with adenine. Is involved in the transfer of the threonylcarbamoyl moiety of threonylcarbamoyl-AMP (TC-AMP) to the N6 group of A37, together with TsaE and TsaB. TsaD likely plays a direct catalytic role in this reaction. This is tRNA N6-adenosine threonylcarbamoyltransferase from Pseudomonas aeruginosa (strain UCBPP-PA14).